The sequence spans 472 residues: 3-isopropylmalate dehydratase large subunit (472 aa).

[4Fe-4S] cluster-binding residues include Cys353, Cys414, and Cys417.

This sequence belongs to the aconitase/IPM isomerase family. LeuC type 1 subfamily. As to quaternary structure, heterodimer of LeuC and LeuD. It depends on [4Fe-4S] cluster as a cofactor.

It carries out the reaction (2R,3S)-3-isopropylmalate = (2S)-2-isopropylmalate. Its pathway is amino-acid biosynthesis; L-leucine biosynthesis; L-leucine from 3-methyl-2-oxobutanoate: step 2/4. Functionally, catalyzes the isomerization between 2-isopropylmalate and 3-isopropylmalate, via the formation of 2-isopropylmaleate. The protein is 3-isopropylmalate dehydratase large subunit of Acinetobacter baumannii (strain ATCC 17978 / DSM 105126 / CIP 53.77 / LMG 1025 / NCDC KC755 / 5377).